The following is a 117-amino-acid chain: Protein Wnt-6 (117 aa).

Ser1 carries O-palmitoleoyl serine; by PORCN lipidation. Cys83 and Cys98 are joined by a disulfide. Asn84 is a glycosylation site (N-linked (GlcNAc...) asparagine).

The protein belongs to the Wnt family. In terms of processing, palmitoleoylation is required for efficient binding to frizzled receptors. Depalmitoleoylation leads to Wnt signaling pathway inhibition.

It is found in the secreted. It localises to the extracellular space. The protein resides in the extracellular matrix. Its function is as follows. Ligand for members of the frizzled family of seven transmembrane receptors. Probable developmental protein. May be a signaling molecule which affects the development of discrete regions of tissues. Is likely to signal over only few cell diameters. The sequence is that of Protein Wnt-6 (WNT-6) from Plethodon jordani (Red-cheeked salamander).